We begin with the raw amino-acid sequence, 776 residues long: Cilium assembly protein DZIP1L (776 aa).

Residues His-166 to His-189 form a C2H2-type zinc finger. Residues Gly-196–Asn-450 are a coiled coil. 2 positions are modified to phosphoserine: Ser-425 and Ser-426. A disordered region spans residues Ser-520 to Trp-776. Positions Gly-600–Ser-618 are enriched in low complexity. The segment covering Trp-652–Val-683 has biased composition (polar residues). A compositionally biased stretch (basic and acidic residues) spans Asn-685 to Ala-694. Polar residues predominate over residues Thr-709–Thr-721.

This sequence belongs to the DZIP C2H2-type zinc-finger protein family. In terms of assembly, interacts with SEPTIN2.

Its subcellular location is the cytoplasm. It localises to the cytoskeleton. The protein localises to the cilium basal body. The protein resides in the microtubule organizing center. It is found in the centrosome. Its subcellular location is the centriole. Involved in primary cilium formation. Probably acts as a transition zone protein required for localization of PKD1/PC1 and PKD2/PC2 to the ciliary membrane. The chain is Cilium assembly protein DZIP1L from Rattus norvegicus (Rat).